Here is a 209-residue protein sequence, read N- to C-terminus: MKKAILGKKLGMTQIFNENGKVIPVTVIEAGPCTVIQKKTVEKDGYEAIQVAFGDIREKLRNKPVKGHFAKAGVSVKRHIKEFKLEDSNSLEIGQEIKADVFEAGERVDISGVSKGKGFQGTIRRWNAHRGPMSHGSKFHRAVGSMGASSDPSRTFKNKRMPGHMGNVNTTVLNLEVVRIIPEKNLILIKGGVPGPNKGLVQIRNTVKA.

A disordered region spans residues Arg141–Gly163.

The protein belongs to the universal ribosomal protein uL3 family. In terms of assembly, part of the 50S ribosomal subunit. Forms a cluster with proteins L14 and L19.

One of the primary rRNA binding proteins, it binds directly near the 3'-end of the 23S rRNA, where it nucleates assembly of the 50S subunit. The polypeptide is Large ribosomal subunit protein uL3 (Clostridium botulinum (strain Langeland / NCTC 10281 / Type F)).